We begin with the raw amino-acid sequence, 200 residues long: Dual-action ribosomal maturation protein DarP (200 aa).

Disordered stretches follow at residues 1 to 25 (MTRK…DRPS) and 177 to 200 (TASG…DDEA). A compositionally biased stretch (basic and acidic residues) spans 12–25 (HAAEVDDNGYDRPS). Residues 184–200 (GDDEAADEAGDDHDDEA) are compositionally biased toward acidic residues.

Belongs to the DarP family.

Its subcellular location is the cytoplasm. Member of a network of 50S ribosomal subunit biogenesis factors which assembles along the 30S-50S interface, preventing incorrect 23S rRNA structures from forming. Promotes peptidyl transferase center (PTC) maturation. The sequence is that of Dual-action ribosomal maturation protein DarP from Burkholderia ambifaria (strain MC40-6).